Reading from the N-terminus, the 676-residue chain is RNA helicase NPH-II (676 aa).

The 176-residue stretch at 172 to 347 folds into the Helicase ATP-binding domain; it reads FLAWISHRPV…IFLPNPAFIH (176 aa). 185–192 provides a ligand contact to ATP; that stretch reads GGTGVGKT. Residues 296–299 carry the DEXH box motif; the sequence is DEVH. Positions 366-535 constitute a Helicase C-terminal domain; sequence NPSSRMAYIE…NYILYANKFN (170 aa).

This sequence belongs to the DEAD box helicase family. DEAH subfamily. In terms of assembly, monomer.

It is found in the virion. It catalyses the reaction ATP + H2O = ADP + phosphate + H(+). Functionally, NTP-dependent helicase that catalyzes unidirectional unwinding of 3'tailed duplex RNAs and plays an important role during transcription of early mRNAs, presumably by preventing R-loop formation behind the elongating RNA polymerase. Might also play a role in the export of newly synthesized mRNA chains out of the core into the cytoplasm. Required for replication and propagation of viral particles. The sequence is that of RNA helicase NPH-II (OPG084) from Monkeypox virus.